The sequence spans 194 residues: Peptidyl-tRNA hydrolase (194 aa).

Tyr17 serves as a coordination point for tRNA. Catalysis depends on His22, which acts as the Proton acceptor. 3 residues coordinate tRNA: Tyr69, Asn71, and Asn117.

The protein belongs to the PTH family. Monomer.

Its subcellular location is the cytoplasm. The enzyme catalyses an N-acyl-L-alpha-aminoacyl-tRNA + H2O = an N-acyl-L-amino acid + a tRNA + H(+). Its function is as follows. Hydrolyzes ribosome-free peptidyl-tRNAs (with 1 or more amino acids incorporated), which drop off the ribosome during protein synthesis, or as a result of ribosome stalling. Catalyzes the release of premature peptidyl moieties from peptidyl-tRNA molecules trapped in stalled 50S ribosomal subunits, and thus maintains levels of free tRNAs and 50S ribosomes. This Arthrobacter sp. (strain FB24) protein is Peptidyl-tRNA hydrolase.